Reading from the N-terminus, the 162-residue chain is Large ribosomal subunit protein uL10 (162 aa).

The protein belongs to the universal ribosomal protein uL10 family. In terms of assembly, part of the ribosomal stalk of the 50S ribosomal subunit. The N-terminus interacts with L11 and the large rRNA to form the base of the stalk. The C-terminus forms an elongated spine to which L12 dimers bind in a sequential fashion forming a multimeric L10(L12)X complex.

Functionally, forms part of the ribosomal stalk, playing a central role in the interaction of the ribosome with GTP-bound translation factors. This chain is Large ribosomal subunit protein uL10, found in Borrelia duttonii (strain Ly).